Reading from the N-terminus, the 265-residue chain is Tryptophan synthase alpha chain (265 aa).

Residues glutamate 49 and aspartate 60 each act as proton acceptor in the active site.

This sequence belongs to the TrpA family. Tetramer of two alpha and two beta chains.

The catalysed reaction is (1S,2R)-1-C-(indol-3-yl)glycerol 3-phosphate + L-serine = D-glyceraldehyde 3-phosphate + L-tryptophan + H2O. It functions in the pathway amino-acid biosynthesis; L-tryptophan biosynthesis; L-tryptophan from chorismate: step 5/5. Functionally, the alpha subunit is responsible for the aldol cleavage of indoleglycerol phosphate to indole and glyceraldehyde 3-phosphate. The polypeptide is Tryptophan synthase alpha chain (Cupriavidus pinatubonensis (strain JMP 134 / LMG 1197) (Cupriavidus necator (strain JMP 134))).